The sequence spans 601 residues: Elongation factor 4 (601 aa).

One can recognise a tr-type G domain in the interval 7-189 (DNIRNFSIVA…AIVKRLPAPK (183 aa)). GTP is bound by residues 19–24 (DHGKST) and 136–139 (NKVD).

It belongs to the TRAFAC class translation factor GTPase superfamily. Classic translation factor GTPase family. LepA subfamily.

The protein resides in the cell inner membrane. It catalyses the reaction GTP + H2O = GDP + phosphate + H(+). In terms of biological role, required for accurate and efficient protein synthesis under certain stress conditions. May act as a fidelity factor of the translation reaction, by catalyzing a one-codon backward translocation of tRNAs on improperly translocated ribosomes. Back-translocation proceeds from a post-translocation (POST) complex to a pre-translocation (PRE) complex, thus giving elongation factor G a second chance to translocate the tRNAs correctly. Binds to ribosomes in a GTP-dependent manner. The polypeptide is Elongation factor 4 (Methylorubrum extorquens (strain CM4 / NCIMB 13688) (Methylobacterium extorquens)).